Here is a 330-residue protein sequence, read N- to C-terminus: Methionyl-tRNA formyltransferase (330 aa).

A (6S)-5,6,7,8-tetrahydrofolate-binding site is contributed by 121–124; the sequence is SLLP.

Belongs to the Fmt family.

The enzyme catalyses L-methionyl-tRNA(fMet) + (6R)-10-formyltetrahydrofolate = N-formyl-L-methionyl-tRNA(fMet) + (6S)-5,6,7,8-tetrahydrofolate + H(+). Functionally, attaches a formyl group to the free amino group of methionyl-tRNA(fMet). The formyl group appears to play a dual role in the initiator identity of N-formylmethionyl-tRNA by promoting its recognition by IF2 and preventing the misappropriation of this tRNA by the elongation apparatus. This chain is Methionyl-tRNA formyltransferase, found in Burkholderia cenocepacia (strain HI2424).